Here is a 604-residue protein sequence, read N- to C-terminus: 2-isopropylmalate synthase 2, mitochondrial (604 aa).

Residues 1-50 (MVKHSFIALAEHASKLRRSIPPVKLTYKNMLRDPSVKYRAFAPPKMVKRI) constitute a mitochondrion transit peptide. Residues 60–335 (PRWLSTDLRD…SPNLDFSDLT (276 aa)) form the Pyruvate carboxyltransferase domain. Residues Asp69, His274, His276, and Asn310 each contribute to the a divalent metal cation site.

This sequence belongs to the alpha-IPM synthase/homocitrate synthase family. LeuA type 2 subfamily. Homodimer. Requires a divalent metal cation as cofactor.

Its subcellular location is the mitochondrion. It carries out the reaction 3-methyl-2-oxobutanoate + acetyl-CoA + H2O = (2S)-2-isopropylmalate + CoA + H(+). The protein operates within amino-acid biosynthesis; L-leucine biosynthesis; L-leucine from 3-methyl-2-oxobutanoate: step 1/4. Functionally, catalyzes the condensation of the acetyl group of acetyl-CoA with 3-methyl-2-oxobutanoate (2-oxoisovalerate) to form 3-carboxy-3-hydroxy-4-methylpentanoate (2-isopropylmalate). Redundant to LEU4, responsible for about 20% of alpha-IPMS activity. Involved in leucine synthesis. In Saccharomyces cerevisiae (strain ATCC 204508 / S288c) (Baker's yeast), this protein is 2-isopropylmalate synthase 2, mitochondrial.